We begin with the raw amino-acid sequence, 318 residues long: Oncosphere antigen A (318 aa).

Fibronectin type-III domains lie at 6–103, 109–207, and 211–308; these read IPQN…TPLP, KPSF…ISRA, and VPQN…TPSV.

The chain is Oncosphere antigen A (ONCA) from Hydatigena taeniaeformis (Feline tapeworm).